Here is a 198-residue protein sequence, read N- to C-terminus: Recombination protein RecR (198 aa).

Residues 57-72 (CAMCNTFTESAVCETC) form a C4-type zinc finger. Residues 80–175 (ALLCVVETPG…KVSRLARGVP (96 aa)) enclose the Toprim domain.

Belongs to the RecR family.

Its function is as follows. May play a role in DNA repair. It seems to be involved in an RecBC-independent recombinational process of DNA repair. It may act with RecF and RecO. In Herminiimonas arsenicoxydans, this protein is Recombination protein RecR.